The sequence spans 158 residues: D-aminoacyl-tRNA deacylase (158 aa).

Residues G143–P144 carry the Gly-cisPro motif, important for rejection of L-amino acids motif.

This sequence belongs to the DTD family. As to quaternary structure, homodimer.

The protein localises to the cytoplasm. It carries out the reaction glycyl-tRNA(Ala) + H2O = tRNA(Ala) + glycine + H(+). The enzyme catalyses a D-aminoacyl-tRNA + H2O = a tRNA + a D-alpha-amino acid + H(+). In terms of biological role, an aminoacyl-tRNA editing enzyme that deacylates mischarged D-aminoacyl-tRNAs. Also deacylates mischarged glycyl-tRNA(Ala), protecting cells against glycine mischarging by AlaRS. Acts via tRNA-based rather than protein-based catalysis; rejects L-amino acids rather than detecting D-amino acids in the active site. By recycling D-aminoacyl-tRNA to D-amino acids and free tRNA molecules, this enzyme counteracts the toxicity associated with the formation of D-aminoacyl-tRNA entities in vivo and helps enforce protein L-homochirality. This Solidesulfovibrio magneticus (strain ATCC 700980 / DSM 13731 / RS-1) (Desulfovibrio magneticus) protein is D-aminoacyl-tRNA deacylase.